The chain runs to 146 residues: Mite group 2 allergen Der p 2 (146 aa).

The signal sequence occupies residues 1-17; the sequence is MMYKILCLSLLVAAVAR. Cystine bridges form between C25-C136, C38-C44, and C90-C95.

Belongs to the NPC2 family.

Its subcellular location is the secreted. This is Mite group 2 allergen Der p 2 (DERP2) from Dermatophagoides pteronyssinus (European house dust mite).